We begin with the raw amino-acid sequence, 89 residues long: Small ribosomal subunit protein uS15 (89 aa).

It belongs to the universal ribosomal protein uS15 family. As to quaternary structure, part of the 30S ribosomal subunit. Forms a bridge to the 50S subunit in the 70S ribosome, contacting the 23S rRNA.

Functionally, one of the primary rRNA binding proteins, it binds directly to 16S rRNA where it helps nucleate assembly of the platform of the 30S subunit by binding and bridging several RNA helices of the 16S rRNA. In terms of biological role, forms an intersubunit bridge (bridge B4) with the 23S rRNA of the 50S subunit in the ribosome. This chain is Small ribosomal subunit protein uS15, found in Hahella chejuensis (strain KCTC 2396).